The primary structure comprises 1407 residues: DNA-directed RNA polymerase subunit beta' (1407 aa).

Zn(2+) contacts are provided by Cys70, Cys72, Cys85, and Cys88. Mg(2+) is bound by residues Asp458, Asp460, and Asp462. Zn(2+)-binding residues include Cys814, Cys888, Cys895, and Cys898.

The protein belongs to the RNA polymerase beta' chain family. As to quaternary structure, the RNAP catalytic core consists of 2 alpha, 1 beta, 1 beta' and 1 omega subunit. When a sigma factor is associated with the core the holoenzyme is formed, which can initiate transcription. Requires Mg(2+) as cofactor. Zn(2+) serves as cofactor.

It catalyses the reaction RNA(n) + a ribonucleoside 5'-triphosphate = RNA(n+1) + diphosphate. Its function is as follows. DNA-dependent RNA polymerase catalyzes the transcription of DNA into RNA using the four ribonucleoside triphosphates as substrates. This is DNA-directed RNA polymerase subunit beta' from Leptothrix cholodnii (strain ATCC 51168 / LMG 8142 / SP-6) (Leptothrix discophora (strain SP-6)).